Reading from the N-terminus, the 535-residue chain is CTP synthase (535 aa).

The Glutamine amidotransferase type-1 domain occupies 300-535; it reads RIGIVGKYAP…LVSASYERSK (236 aa). Residues Cys385, His509, and Glu511 each act as for GATase activity in the active site.

The protein belongs to the CTP synthase family.

It catalyses the reaction UTP + L-glutamine + ATP + H2O = CTP + L-glutamate + ADP + phosphate + 2 H(+). Its pathway is pyrimidine metabolism; CTP biosynthesis via de novo pathway; CTP from UDP: step 2/2. In terms of biological role, catalyzes the ATP-dependent amination of UTP to CTP with either L-glutamine or ammonia as the source of nitrogen. The chain is CTP synthase from Encephalitozoon cuniculi (strain GB-M1) (Microsporidian parasite).